Reading from the N-terminus, the 576-residue chain is CTP synthase (576 aa).

The Glutamine amidotransferase type-1 domain occupies 305–559 (QIALVGKYTH…LGLVAAAANI (255 aa)). Residues Cys404, His535, and Glu537 each act as for GATase activity in the active site.

It belongs to the CTP synthase family.

It carries out the reaction UTP + L-glutamine + ATP + H2O = CTP + L-glutamate + ADP + phosphate + 2 H(+). The protein operates within pyrimidine metabolism; CTP biosynthesis via de novo pathway; CTP from UDP: step 2/2. Catalyzes the ATP-dependent amination of UTP to CTP with either L-glutamine or ammonia as the source of nitrogen. The polypeptide is CTP synthase (URA7) (Eremothecium gossypii (strain ATCC 10895 / CBS 109.51 / FGSC 9923 / NRRL Y-1056) (Yeast)).